The sequence spans 86 residues: Heat shock factor-binding protein (86 aa).

Residues 34-63 adopt a coiled-coil conformation; the sequence is MSDSIITKIDDMGGRINELEQSINDLRAEM. Residues 42-52 are required for interactions with heat shock factors (HSFs); it reads IDDMGGRINEL. Residues 59-86 are disordered; the sequence is LRAEMGVEGTPPPASKSGDEPKTPASSS.

This sequence belongs to the HSBP1 family. Homohexamer. Interacts with HSFA1A, HSFA1B and HSFA2. In terms of tissue distribution, mostly expressed in siliques and flowers, and, to a lower extent, in roots, stems and leaves.

It localises to the nucleus. It is found in the cytoplasm. Its subcellular location is the cytosol. Functionally, negative regulator of the heat shock (HS) response. Affects negatively HSFA1B DNA-binding capacity in vitro. Involved in acquired thermotolerance but not basal thermotolerance. Crucial for seed development, after fertilization and during embryogenesis. This chain is Heat shock factor-binding protein, found in Arabidopsis thaliana (Mouse-ear cress).